The sequence spans 317 residues: MMFADDLVRMAVLRFITVALAAITNVANAVPTDATKRQDSNLPFPLAHFTNTVASVQNTYCGPTANTPGVKFGDQTLLHAIGDGDTVQRTNIYHSESLGIIVASQGTNLSSIVSQSHNIQAIPIIPDARLGLPFGSMVFAGWQNAWSKGWTDVSAALADTIKQFPNDQIIVTGHSQGAAISLLTALAIQNQFGNVSTIREIIAYGPPRVGTPAFADAFDTIFPGKYTGVVNGDDWVPSLPSQPIYRHPSGMVWINPANSTSWKYYPGQENPDGPDSRVIQMFYPGTLQFNWGDHQGIYMHSSMGTTQGPCPAQVGGF.

Residues 1–29 (MMFADDLVRMAVLRFITVALAAITNVANA) form the signal peptide. A disulfide bond links Cys-61 and Cys-310. A glycan (N-linked (GlcNAc...) asparagine) is linked at Asn-108. The active-site Nucleophile is the Ser-175. Asn-194 is a glycosylation site (N-linked (GlcNAc...) asparagine). Asp-234 is a catalytic residue. N-linked (GlcNAc...) asparagine glycosylation is present at Asn-258. Residue His-294 is part of the active site.

The protein belongs to the AB hydrolase superfamily. Lipase family. Class 3 subfamily.

Its subcellular location is the secreted. The catalysed reaction is a monoacylglycerol + H2O = glycerol + a fatty acid + H(+). It carries out the reaction a diacylglycerol + H2O = a monoacylglycerol + a fatty acid + H(+). Functionally, secreted mono- and diacylglycerol lipase involved in plant virulence. Has a substrate preference for p-nitrophenyl esters with a carbon chain length of C10 (p-nitrophenyl caprate). The polypeptide is Secreted mono- and diacylglycerol lipase 3 (Gibberella zeae (strain ATCC MYA-4620 / CBS 123657 / FGSC 9075 / NRRL 31084 / PH-1) (Wheat head blight fungus)).